The primary structure comprises 231 residues: 7-cyano-7-deazaguanine synthase (231 aa).

Phe8–Leu18 contributes to the ATP binding site. 4 residues coordinate Zn(2+): Cys188, Cys197, Cys200, and Cys203.

It belongs to the QueC family. Zn(2+) is required as a cofactor.

It carries out the reaction 7-carboxy-7-deazaguanine + NH4(+) + ATP = 7-cyano-7-deazaguanine + ADP + phosphate + H2O + H(+). It functions in the pathway purine metabolism; 7-cyano-7-deazaguanine biosynthesis. In terms of biological role, catalyzes the ATP-dependent conversion of 7-carboxy-7-deazaguanine (CDG) to 7-cyano-7-deazaguanine (preQ(0)). The protein is 7-cyano-7-deazaguanine synthase of Escherichia coli (strain SMS-3-5 / SECEC).